A 241-amino-acid polypeptide reads, in one-letter code: Ribosomal RNA small subunit methyltransferase J (241 aa).

Residues 94 to 95 (RD) and Asp163 each bind S-adenosyl-L-methionine.

It belongs to the methyltransferase superfamily. RsmJ family.

The protein localises to the cytoplasm. It carries out the reaction guanosine(1516) in 16S rRNA + S-adenosyl-L-methionine = N(2)-methylguanosine(1516) in 16S rRNA + S-adenosyl-L-homocysteine + H(+). Functionally, specifically methylates the guanosine in position 1516 of 16S rRNA. The polypeptide is Ribosomal RNA small subunit methyltransferase J (Francisella tularensis subsp. tularensis (strain FSC 198)).